We begin with the raw amino-acid sequence, 170 residues long: Negative modulator of initiation of replication (170 aa).

An interaction with DNA region spans residues 139–145; sequence NTNTGRK.

This sequence belongs to the SeqA family. As to quaternary structure, homodimer. Polymerizes to form helical filaments.

It localises to the cytoplasm. Functionally, negative regulator of replication initiation, which contributes to regulation of DNA replication and ensures that replication initiation occurs exactly once per chromosome per cell cycle. Binds to pairs of hemimethylated GATC sequences in the oriC region, thus preventing assembly of replication proteins and re-initiation at newly replicated origins. Repression is relieved when the region becomes fully methylated. The protein is Negative modulator of initiation of replication of Tolumonas auensis (strain DSM 9187 / NBRC 110442 / TA 4).